Reading from the N-terminus, the 762-residue chain is Polyadenylate-binding protein, cytoplasmic and nuclear (762 aa).

The tract at residues 39 to 58 (TGEEIDTAGPTPSSAAPHPQ) is disordered. A compositionally biased stretch (low complexity) spans 48-58 (PTPSSAAPHPQ). RRM domains are found at residues 61–139 (ASLY…WSQR), 149–226 (GNVF…HHIP), 242–320 (TNIY…RAQK), and 346–470 (VNLY…LAQR). Disordered regions lie at residues 376–429 (KVMR…KSKL), 596–663 (SALA…AGAP), and 740–762 (VRQQ…EEKA). Positions 389 to 425 (GESKEGEESEKNKENKPEEKEGDDSKPEEKEGEDSKS) are enriched in basic and acidic residues. Positions 600 to 612 (GGRGGPAGRGPMQ) are enriched in gly residues. Low complexity predominate over residues 645–663 (AAGRAPAGAPAGARGAGAP). The region spanning 664 to 741 (EGLQGQLAAV…ALAVYDDYVR (78 aa)) is the PABC domain. Over residues 753–762 (SKEEKTEEKA) the composition is skewed to basic and acidic residues.

The protein belongs to the polyadenylate-binding protein type-1 family.

The protein localises to the cytoplasm. The protein resides in the nucleus. Functionally, binds the poly(A) tail of mRNA. Appears to be an important mediator of the multiple roles of the poly(A) tail in mRNA biogenesis, stability and translation. In the nucleus, involved in both mRNA cleavage and polyadenylation. Is also required for efficient mRNA export to the cytoplasm. Acts in concert with a poly(A)-specific nuclease (PAN) to affect poly(A) tail shortening, which may occur concomitantly with either nucleocytoplasmic mRNA transport or translational initiation. In the cytoplasm, stimulates translation initiation and regulates mRNA decay through translation termination-coupled poly(A) shortening, probably mediated by PAN. The polypeptide is Polyadenylate-binding protein, cytoplasmic and nuclear (PAB1) (Pyricularia oryzae (strain 70-15 / ATCC MYA-4617 / FGSC 8958) (Rice blast fungus)).